Consider the following 393-residue polypeptide: Formate-dependent phosphoribosylglycinamide formyltransferase (393 aa).

N(1)-(5-phospho-beta-D-ribosyl)glycinamide contacts are provided by residues 22-23 (EL) and Glu-82. Residues Arg-114, Lys-155, 160–165 (SSGKGQ), 195–198 (EGFI), and Glu-203 each bind ATP. In terms of domain architecture, ATP-grasp spans 119-308 (RLAAEELGLP…EFALHARAIL (190 aa)). Mg(2+)-binding residues include Glu-267 and Glu-279. N(1)-(5-phospho-beta-D-ribosyl)glycinamide-binding positions include Asp-286, Lys-356, and 363-364 (RR).

Belongs to the PurK/PurT family. In terms of assembly, homodimer.

It catalyses the reaction N(1)-(5-phospho-beta-D-ribosyl)glycinamide + formate + ATP = N(2)-formyl-N(1)-(5-phospho-beta-D-ribosyl)glycinamide + ADP + phosphate + H(+). The protein operates within purine metabolism; IMP biosynthesis via de novo pathway; N(2)-formyl-N(1)-(5-phospho-D-ribosyl)glycinamide from N(1)-(5-phospho-D-ribosyl)glycinamide (formate route): step 1/1. Its function is as follows. Involved in the de novo purine biosynthesis. Catalyzes the transfer of formate to 5-phospho-ribosyl-glycinamide (GAR), producing 5-phospho-ribosyl-N-formylglycinamide (FGAR). Formate is provided by PurU via hydrolysis of 10-formyl-tetrahydrofolate. This Stutzerimonas stutzeri (strain A1501) (Pseudomonas stutzeri) protein is Formate-dependent phosphoribosylglycinamide formyltransferase.